Reading from the N-terminus, the 172-residue chain is Small ribosomal subunit protein uS5 (172 aa).

In terms of domain architecture, S5 DRBM spans 16–79; it reads LKDRLVAINR…ESAKKNLVKV (64 aa).

Belongs to the universal ribosomal protein uS5 family. As to quaternary structure, part of the 30S ribosomal subunit. Contacts proteins S4 and S8.

In terms of biological role, with S4 and S12 plays an important role in translational accuracy. Its function is as follows. Located at the back of the 30S subunit body where it stabilizes the conformation of the head with respect to the body. The sequence is that of Small ribosomal subunit protein uS5 from Bacteroides thetaiotaomicron (strain ATCC 29148 / DSM 2079 / JCM 5827 / CCUG 10774 / NCTC 10582 / VPI-5482 / E50).